We begin with the raw amino-acid sequence, 296 residues long: Calponin-2 (296 aa).

Serine 2 bears the N-acetylserine mark. Lysine 8 and lysine 25 each carry N6-acetyllysine. The region spanning 28-132 is the Calponin-homology (CH) domain; that stretch reads PQKEAELRSW…SLLALAGKAK (105 aa). A Phosphoserine modification is found at serine 138. Calponin-like repeat units follow at residues 166-191, 206-231, and 245-269; these read IGLQ…RHLY, ISLQ…RHIY, and MSLQ…RQIY. Residues 275–296 are disordered; it reads PQGPAADGAPAAAGDCPGPGES.

This sequence belongs to the calponin family. In terms of tissue distribution, smooth muscle, and tissues containing significant amounts of smooth muscle.

Thin filament-associated protein that is implicated in the regulation and modulation of smooth muscle contraction. It is capable of binding to actin, calmodulin and tropomyosin. The interaction of calponin with actin inhibits the actomyosin Mg-ATPase activity. The sequence is that of Calponin-2 (CNN2) from Sus scrofa (Pig).